The following is a 101-amino-acid chain: Small ribosomal subunit protein uS14 (101 aa).

It belongs to the universal ribosomal protein uS14 family. As to quaternary structure, part of the 30S ribosomal subunit. Contacts proteins S3 and S10.

Functionally, binds 16S rRNA, required for the assembly of 30S particles and may also be responsible for determining the conformation of the 16S rRNA at the A site. The polypeptide is Small ribosomal subunit protein uS14 (Chlamydia trachomatis serovar L2 (strain ATCC VR-902B / DSM 19102 / 434/Bu)).